Consider the following 515-residue polypeptide: Na(+)/H(+) antiporter NhaB (515 aa).

Transmembrane regions (helical) follow at residues 23-43, 44-64, 88-108, 119-139, 143-163, 202-222, 238-258, 303-323, 324-344, 357-377, 389-409, 447-467, and 477-497; these read IIVF…FIAG, WCLV…YPLQ, IMAS…IYFM, LLIT…SAAF, FLDA…FYGV, LMMH…VGEP, FFIR…ITCV, GIIG…VGLI, GLSV…STIG, LVVF…GPII, LLLF…VFVA, ATPN…APLI, and MALP…EYIL.

This sequence belongs to the NhaB Na(+)/H(+) (TC 2.A.34) antiporter family.

It is found in the cell inner membrane. The catalysed reaction is 2 Na(+)(in) + 3 H(+)(out) = 2 Na(+)(out) + 3 H(+)(in). Functionally, na(+)/H(+) antiporter that extrudes sodium in exchange for external protons. The protein is Na(+)/H(+) antiporter NhaB of Mannheimia succiniciproducens (strain KCTC 0769BP / MBEL55E).